The primary structure comprises 649 residues: Mitochondrial Rho GTPase 1 (649 aa).

The Cytoplasmic portion of the chain corresponds to 1 to 623; the sequence is MTKETIRVVI…KPTNIDYSSA (623 aa). The region spanning 3–176 is the Miro 1 domain; the sequence is KETIRVVICG…FYLCQRSISY (174 aa). GTP contacts are provided by residues 12–19, 61–63, and 115–118; these read GDDGVGKT, DTD, and NKCD. 2 EF-hand domains span residues 192-227 and 320-355; these read SAVA…CFGK and KGYR…TPGL. Residues D205, D207, D209, E216, D333, D335, D337, and E344 each contribute to the Ca(2+) site. The Miro 2 domain maps to 436-601; sequence RKVFNCFVVG…FKKIIQASLE (166 aa). GTP contacts are provided by residues 445–452, 481–485, and 550–553; these read GKRNSGKS, EVTGD, and LKAD. A helical; Anchor for type IV membrane protein membrane pass occupies residues 624–644; sequence VILGSSIGFLALFSYTMIKLL. Residues 645-649 lie on the Mitochondrial intermembrane side of the membrane; the sequence is KPTQQ.

It belongs to the mitochondrial Rho GTPase family.

Its subcellular location is the mitochondrion outer membrane. Its function is as follows. Mitochondrial GTPase involved in mitochondrial trafficking. Probably involved in control of anterograde transport of mitochondria and their subcellular distribution. The chain is Mitochondrial Rho GTPase 1 (GEM1) from Candida glabrata (strain ATCC 2001 / BCRC 20586 / JCM 3761 / NBRC 0622 / NRRL Y-65 / CBS 138) (Yeast).